The primary structure comprises 185 residues: Elongation factor P (185 aa).

This sequence belongs to the elongation factor P family.

Its subcellular location is the cytoplasm. It participates in protein biosynthesis; polypeptide chain elongation. In terms of biological role, involved in peptide bond synthesis. Stimulates efficient translation and peptide-bond synthesis on native or reconstituted 70S ribosomes in vitro. Probably functions indirectly by altering the affinity of the ribosome for aminoacyl-tRNA, thus increasing their reactivity as acceptors for peptidyl transferase. The protein is Elongation factor P of Mesoplasma florum (strain ATCC 33453 / NBRC 100688 / NCTC 11704 / L1) (Acholeplasma florum).